A 373-amino-acid chain; its full sequence is Leucine aminopeptidase 1 (373 aa).

A signal peptide spans 1–18 (MKLLSVLALSATATSVLG). The N-linked (GlcNAc...) asparagine glycan is linked to Asn136. 2 residues coordinate Zn(2+): His176 and Asp195. N-linked (GlcNAc...) asparagine glycosylation is present at Asn196. Residues Glu234 and Asp261 each contribute to the Zn(2+) site. An N-linked (GlcNAc...) asparagine glycan is attached at Asn284. Cys310 and Cys314 are joined by a disulfide. His343 is a binding site for Zn(2+).

It belongs to the peptidase M28 family. M28E subfamily. In terms of assembly, monomer. Requires Zn(2+) as cofactor.

It is found in the secreted. Functionally, extracellular aminopeptidase which contributes to pathogenicity. In Trichophyton equinum (Horse ringworm fungus), this protein is Leucine aminopeptidase 1 (LAP1).